The sequence spans 349 residues: KH domain-containing, RNA-binding, signal transduction-associated protein 2 (349 aa).

The region spanning 65 to 135 (LIPVKQYPKF…HLSDELHVLI (71 aa)) is the KH domain. Disordered regions lie at residues 181 to 263 (SEES…PPPA) and 321 to 349 (EWAT…YGRY). A compositionally biased stretch (low complexity) spans 218 to 231 (RGVLTPRGTTVTRG). Residues Arg230 and Arg240 each carry the omega-N-methylarginine modification. A compositionally biased stretch (basic and acidic residues) spans 340–349 (GYREHPYGRY).

It belongs to the KHDRBS family. Self-associates to form homooligomers. Interacts with KHDRBS1/SAM68; heterooligomer formation of KHDRBS family proteins may modulate RNA substrate specificity. Interacts with RBMX, SAFB, SFRS9 and YTHDC1. Interacts with FYN and PLCG1 (via SH3 domain). Interacts (phosphorylated) with FYN, GRB2, PLCG1 and RASA1 (via SH2 domain). Methylated. Post-translationally, tyrosine phosphorylated by FYN, PTK6 and SRC. Tyrosine phosphorylated by SRC during mitosis. Expressed in heart, skin, brain, colon, spleen, kidney, cervix and testis. In adult cerebellum expressed predominantly in Purkinje cells and in the hippocampus is abundantly expressed in glutamatergic dentate granule cells and in specific inhibitory Schaffer collateral-associated and path-associated interneurons; expression is restricted to neuronal subpopulations largely non-overlapping with expression of KHDRBS3/SLM-2 (at protein level).

The protein localises to the nucleus. RNA-binding protein that plays a role in the regulation of alternative splicing and influences mRNA splice site selection and exon inclusion. Binds both poly(A) and poly(U) homopolymers. Phosphorylation by PTK6 inhibits its RNA-binding ability. Induces an increased concentration-dependent incorporation of exon in CD44 pre-mRNA by direct binding to purine-rich exonic enhancer. Can regulate alternative splicing of neurexins NRXN1-3 in the laminin G-like domain 6 containing the evolutionary conserved neurexin alternative spliced segment 4 (AS4) involved in neurexin selective targeting to postsynaptic partners. Regulates cell-type specific alternative splicing of NRXN1 at AS4 and acts synergystically with SAM68 in exon skipping. In contrast acts antagonistically with SAM68 in NRXN3 exon skipping at AS4. Its phosphorylation by FYN inhibits its ability to regulate splice site selection. May function as an adapter protein for Src kinases during mitosis. The protein is KH domain-containing, RNA-binding, signal transduction-associated protein 2 (Khdrbs2) of Mus musculus (Mouse).